The chain runs to 215 residues: Probable phosphoglycerate mutase GpmB (215 aa).

Residues 8–15, 21–22, R58, K60, 82–85, 104–105, and 151–152 contribute to the substrate site; these read RHGETQWN, QG, ELDM, RR, and GI. H9 (tele-phosphohistidine intermediate) is an active-site residue. The active-site Proton donor/acceptor is E82.

It belongs to the phosphoglycerate mutase family. GpmB subfamily.

The enzyme catalyses (2R)-2-phosphoglycerate = (2R)-3-phosphoglycerate. The protein operates within carbohydrate degradation; glycolysis; pyruvate from D-glyceraldehyde 3-phosphate: step 3/5. The protein is Probable phosphoglycerate mutase GpmB of Salmonella arizonae (strain ATCC BAA-731 / CDC346-86 / RSK2980).